Here is a 1806-residue protein sequence, read N- to C-terminus: MPVYTPQSGSLPEYSKMKLLYFSNELPKDDLQGLFRRLYNHSKDRRYPLLARFIHEATLAVREEVRQLPTAVKALVPAFETVLNLADYPELRKGPLGGSLEGVLLCVLEIATLIGHVPRLYFKEAADCCSYYENASERFDLHAVSTYLAGLGLGLLSTAAVALCSALADVPVIGAEVVRVSFRLGTLVDEISQNLEPRDTSGSPDTWASVVPGAKVEEVQAELDAIHAREKTPQPSKIFISAWNEGSVTISGPPSRIRRVLRLSEFFRRHRVVSLPVYSGLCHAKHLYNEQHAREIISTRSMDSINALYSPAIPVYQTSTGRPFTASTAKGLFEQLVLELLTQPILWDNVVQGVVDQAYATSATSCDVLVFRISVPINDLRTALGSKLQGFETSTEELIPWILQKSDMEIPRGTAQSKIAIIGMSCRMPGGATDTEKFWELLEQGLDVARKIPADRFDVETHYDPKGKRVNTSHTPYGCFIDEPGLFDAPFFNMSPREAQQTDPMQRLAIVTAYEALERAGYVANRTPATNLHRIGTFYGQASDDYREVNTAQEISTYFIPGGCRAFGPGRINYFFKFSGPSFSCDTACSSSLATIQAACTSLWNGDTDMVVAGGMNVLTNSDAFAGLSHGHFLSKTPGACKTWDVNADGYCRADGIGSIVMKRLEDAEADNDNIIGIIRAAATNHSAEAISITHPHAGAQAYLYRQVMSSAGIDPLDVSFVEMHGTGTQAGDSVEITSITDIFAPITKRRSAQQPLHIGAVKANVGHGEAVAGVTALLKVLLMYQKNAIPPHVGIKNSLNPLFPKDLDKRNLHIPYQKVPWPRVKGKKRYAVVNNFSAAGGNTTVCLEEPPLRETDYVDPRTAHVVNVSAKSKISFKKNLERLVAYLDANPDTSLASLSYTTTARRYHHNHRASVAATDIAQVKKKLLSYIDKVEAHKPIPATGPPQVAFAFTGQGASYKSMNLELFHHSPYFRSQLLHLDALAQGQGFPSFIPAVDGSHEKDYAHSPVVTQLALVSVEIALAKYWISLGVKPNAVVGHSLGEYAAFHVAGVLSASDALFLVGRRAQLLEEKCQIGSHKMLAVRAPLADIEKALEGTNYEVACINGPKETVLSGSQAQVEVVSEILQSVGYRCTSLDVAFAFHSSQTEAILDDFEEAAKDGVLFRAPNMPVISPLLGKVIFDDKTITAKYMRRATRETVNFLSALEMAQTFSTVDEETVWVEIGPHPVCMGFVNATLPAVNETVASMKRGEDNWVTLCNSLTALHCAGVPIEWNEYQRPFEKGLRLLDLPTYAWNDKTYWIQYNGDWALTKGNTFYDAEKSLKAQQTGQLASVPSGLRTSTVQQIIEESFNGSAGKVVMQSDMMQPDFLDAAHGHKMNGCGVVTSSIHGDIGFTLGGYLYKNLVKGGKAPDMNMANLVVLRGLVAQKNTKKPQYIRVTISTTDINSGVAELIWQNVLNDNTADEPFASASILYDDAALWLKSWIPSTHLVQGRIEALERLAEDGIANRFTRNMAYLLFANNLVDYAQKYRGMQSVVLHELEAFADITLSTEKSGTWTIPPYFIDSVAHLAGFVMNVSDAIDTKANYCVTPGWKSLRFAKPLVAGAKYRSYVKMIQTEEDPTVYLGDVYIMQDGAIIGMCGGIQFRRYPRILLNRFFTAPEEAGAISHAAASSTPAPRTKPEPVPVATPATAAAPVAQSPAAPASVTPAPAPAPAPGPTPAAAPAAAGESDSVAAKALVLIAKEAALELSDLTDDASFANLGVDSLMSLVIAEKFREELGVTVTGSLFLEYPTIGDLRSWLLEYYN.

The segment at 30–283 is N-terminal acylcarrier protein transacylase domain (SAT); the sequence is DLQGLFRRLY…SLPVYSGLCH (254 aa). The Ketosynthase family 3 (KS3) domain maps to 416 to 850; sequence QSKIAIIGMS…GGNTTVCLEE (435 aa). Active-site for beta-ketoacyl synthase activity residues include Cys589, His725, and His768. The segment at 951–1270 is malonyl-CoA:ACP transacylase (MAT) domain; the sequence is FAFTGQGASY…SLTALHCAGV (320 aa). The segment at 1340-1659 is product template (PT) domain; sequence TSTVQQIIEE…RILLNRFFTA (320 aa). Residues 1344–1479 are N-terminal hotdog fold; the sequence is QQIIEESFNG…ASILYDDAAL (136 aa). In terms of domain architecture, PKS/mFAS DH spans 1344-1654; sequence QQIIEESFNG…FRRYPRILLN (311 aa). His1376 (proton acceptor; for dehydratase activity) is an active-site residue. The tract at residues 1506–1654 is C-terminal hotdog fold; the sequence is IANRFTRNMA…FRRYPRILLN (149 aa). The active-site Proton donor; for dehydratase activity is Asp1565. Residues 1668 to 1726 are disordered; the sequence is HAAASSTPAPRTKPEPVPVATPATAAAPVAQSPAAPASVTPAPAPAPAPGPTPAAAPAA. The span at 1685–1708 shows a compositional bias: low complexity; it reads PVATPATAAAPVAQSPAAPASVTP. Pro residues predominate over residues 1709-1721; it reads APAPAPAPGPTPA. The Carrier domain occupies 1728-1805; the sequence is GESDSVAAKA…DLRSWLLEYY (78 aa). The residue at position 1765 (Ser1765) is an O-(pantetheine 4'-phosphoryl)serine.

It carries out the reaction holo-[ACP] + 8 malonyl-CoA + 8 H(+) = atrochrysone carboxyl-[ACP] + 8 CO2 + 8 CoA + 2 H2O. Its pathway is secondary metabolite biosynthesis. Atrochrysone carboxylic acid synthase; part of the gene cluster that mediates the biosynthesis of monodictyphenone, a prenyl xanthone derivative. The pathway begins with the synthesis of atrochrysone thioester by the polyketide synthase (PKS) mdpG. The atrochrysone carboxyl ACP thioesterase mdpF then breaks the thioester bond and releases the atrochrysone carboxylic acid from mdpG. The atrochrysone carboxylic acid is then converted to atrochrysone which is further transformed into emodin anthrone. The next step is performed by the anthrone oxygenase mdpH that catalyzes the oxidation of emodinanthrone to emodin. Emodin is further modified to yield monodictyphenone via several steps involving mdpB, mdpC mdpJ, mdpK and mdpL. The short chain dehydrogenase mdpC converts the tautomers of emodin hydroquinone into the 3-hydroxy-3,4-dihydroan-thracen-1(2H)-one derivative. These enzymes with xptA, xptB and xptC are also proposed to be involved in the synthesis of shamixanthone from emodin. Especially, direct reduction of emodin by the short chain dehydrogenase mdpC followed by dehydration catalyzed by the scytalone dehydratase-like protein mdpB gives loss of oxygen and formation of chrysophanol intermediate in two simple steps. The sequence is that of Atrochrysone carboxylic acid synthase from Emericella nidulans (strain FGSC A4 / ATCC 38163 / CBS 112.46 / NRRL 194 / M139) (Aspergillus nidulans).